The chain runs to 264 residues: S-adenosylmethionine decarboxylase proenzyme (264 aa).

S112 (schiff-base intermediate with substrate; via pyruvic acid) is an active-site residue. Residue S112 is modified to Pyruvic acid (Ser); by autocatalysis. The active-site Proton acceptor; for processing activity is the H117. Residue C140 is the Proton donor; for catalytic activity of the active site.

The protein belongs to the prokaryotic AdoMetDC family. Type 2 subfamily. As to quaternary structure, heterooctamer of four alpha and four beta chains arranged as a tetramer of alpha/beta heterodimers. Pyruvate is required as a cofactor. Post-translationally, is synthesized initially as an inactive proenzyme. Formation of the active enzyme involves a self-maturation process in which the active site pyruvoyl group is generated from an internal serine residue via an autocatalytic post-translational modification. Two non-identical subunits are generated from the proenzyme in this reaction, and the pyruvate is formed at the N-terminus of the alpha chain, which is derived from the carboxyl end of the proenzyme. The post-translation cleavage follows an unusual pathway, termed non-hydrolytic serinolysis, in which the side chain hydroxyl group of the serine supplies its oxygen atom to form the C-terminus of the beta chain, while the remainder of the serine residue undergoes an oxidative deamination to produce ammonia and the pyruvoyl group blocking the N-terminus of the alpha chain.

It catalyses the reaction S-adenosyl-L-methionine + H(+) = S-adenosyl 3-(methylsulfanyl)propylamine + CO2. It functions in the pathway amine and polyamine biosynthesis; S-adenosylmethioninamine biosynthesis; S-adenosylmethioninamine from S-adenosyl-L-methionine: step 1/1. Functionally, catalyzes the decarboxylation of S-adenosylmethionine to S-adenosylmethioninamine (dcAdoMet), the propylamine donor required for the synthesis of the polyamines spermine and spermidine from the diamine putrescine. This Escherichia coli O45:K1 (strain S88 / ExPEC) protein is S-adenosylmethionine decarboxylase proenzyme.